Reading from the N-terminus, the 251-residue chain is Ubiquinone/menaquinone biosynthesis C-methyltransferase UbiE (251 aa).

Residues threonine 74, aspartate 95, 123–124 (NA), and serine 140 each bind S-adenosyl-L-methionine.

This sequence belongs to the class I-like SAM-binding methyltransferase superfamily. MenG/UbiE family.

It catalyses the reaction a 2-demethylmenaquinol + S-adenosyl-L-methionine = a menaquinol + S-adenosyl-L-homocysteine + H(+). It carries out the reaction a 2-methoxy-6-(all-trans-polyprenyl)benzene-1,4-diol + S-adenosyl-L-methionine = a 5-methoxy-2-methyl-3-(all-trans-polyprenyl)benzene-1,4-diol + S-adenosyl-L-homocysteine + H(+). It participates in quinol/quinone metabolism; menaquinone biosynthesis; menaquinol from 1,4-dihydroxy-2-naphthoate: step 2/2. It functions in the pathway cofactor biosynthesis; ubiquinone biosynthesis. Functionally, methyltransferase required for the conversion of demethylmenaquinol (DMKH2) to menaquinol (MKH2) and the conversion of 2-polyprenyl-6-methoxy-1,4-benzoquinol (DDMQH2) to 2-polyprenyl-3-methyl-6-methoxy-1,4-benzoquinol (DMQH2). The sequence is that of Ubiquinone/menaquinone biosynthesis C-methyltransferase UbiE from Escherichia coli O9:H4 (strain HS).